We begin with the raw amino-acid sequence, 1357 residues long: Ubiquitin carboxyl-terminal hydrolase 19 (1357 aa).

Disordered stretches follow at residues 1–52 (MSAG…PTKD), 162–239 (LSPI…SDSA), and 275–296 (VSPR…EKDD). Over 1–1330 (MSAGTSATGP…TTSDEGCLRY (1330 aa)) the chain is Cytoplasmic. Composition is skewed to basic and acidic residues over residues 28-52 (DRAN…PTKD) and 171-182 (SEPRRAKQEARN). In terms of domain architecture, CS 1 spans 51–140 (KDELLLDWRQ…VPLLTWPSLL (90 aa)). Low complexity predominate over residues 194 to 206 (SGASPGAQAGPSA). 2 positions are modified to phosphoserine: Ser221 and Ser283. Residues 321–423 (LAFVKNDSYE…RQSQRWGGLE (103 aa)) form the CS 2 domain. Residues 432–479 (AKVAVPTGPTPLDSTPPGGGPLPLTGQEEARAVEKEKPKARSEDSGLD) are disordered. Residues 437-457 (PTGPTPLDSTPPGGGPLPLTG) show a composition bias toward low complexity. Residues 459–475 (EEARAVEKEKPKARSED) show a composition bias toward basic and acidic residues. The USP domain occupies 536–1253 (TGLVNLGNTC…YAYVLFYRRR (718 aa)). The active-site Nucleophile is the Cys545. Positions 830, 833, 847, 850, 856, 860, 868, and 872 each coordinate Zn(2+). The MYND-type zinc finger occupies 830–872 (CAACQRKQQSEDEKLKRCTRCYRVGYCNQFCQKTHWPDHKGLC). The tract at residues 962 to 981 (DTGAHRMWPPADRGPVPSTS) is disordered. The active-site Proton acceptor is His1204. The span at 1259–1271 (RPPRAAHAEHHPD) shows a compositional bias: basic and acidic residues. Disordered stretches follow at residues 1259-1278 (RPPR…AAEA) and 1292-1320 (AEEE…PRGP). The helical transmembrane segment at 1331-1351 (FVLGTVAALVALVLNVFYPLV) threads the bilayer. Over 1352–1357 (SQSRWR) the chain is Lumenal.

In terms of assembly, interacts with RNF123. Interacts with BIRC2/c-IAP1, BIRC3/c-IAP2 and XIAP/BIRC4. Interacts with HIF1A (via N-terminus). Expressed in testis, heart, kidney and skeletal muscle. Low levels of expression are detectable in all other tissues screened.

Its subcellular location is the endoplasmic reticulum membrane. It carries out the reaction Thiol-dependent hydrolysis of ester, thioester, amide, peptide and isopeptide bonds formed by the C-terminal Gly of ubiquitin (a 76-residue protein attached to proteins as an intracellular targeting signal).. Deubiquitinating enzyme that regulates the degradation of various proteins by removing ubiquitin moieties, thereby preventing their proteasomal degradation. Stabilizes RNF123, which promotes CDKN1B degradation and contributes to cell proliferation. Decreases the levels of ubiquitinated proteins during skeletal muscle formation and acts to repress myogenesis. Modulates transcription of major myofibrillar proteins. Also involved in turnover of endoplasmic-reticulum-associated degradation (ERAD) substrates. Mechanistically, deubiquitinates and thereby stabilizes several E3 ligases involved in the ERAD pathway including SYVN1 or MARCHF6. Regulates the stability of other E3 ligases including BIRC2/c-IAP1 and BIRC3/c-IAP2 by preventing their ubiquitination. Required for cells to mount an appropriate response to hypoxia by rescuing HIF1A from degradation in a non-catalytic manner and by mediating the deubiquitination of FUNDC1. Attenuates mitochondrial damage and ferroptosis by targeting and stabilizing NADPH oxidase 4/NOX4. Negatively regulates TNF-alpha- and IL-1beta-triggered NF-kappa-B activation by hydrolyzing 'Lys-27'- and 'Lys-63'-linked polyubiquitin chains from MAP3K7. Modulates also the protein level and aggregation of polyQ-expanded huntingtin/HTT through HSP90AA1. The chain is Ubiquitin carboxyl-terminal hydrolase 19 (Usp19) from Rattus norvegicus (Rat).